The following is a 208-amino-acid chain: Protein DEHYDRATION-INDUCED 19 homolog 6 (208 aa).

A disordered region spans residues 151 to 190 (VDSPRRSEADAEGHGSSSSDDQKRREQGVMDDASKEELEE). Composition is skewed to basic and acidic residues over residues 153–163 (SPRRSEADAEG) and 170–190 (DDQK…ELEE).

Belongs to the Di19 family.

This chain is Protein DEHYDRATION-INDUCED 19 homolog 6 (DI19-6), found in Oryza sativa subsp. japonica (Rice).